Here is a 258-residue protein sequence, read N- to C-terminus: Alpha- and beta-fibrinogenase stejnefibrase-1 (258 aa).

A signal peptide spans 1–18 (MELIRVLANLLILQLSYA). Residues 19–24 (QKSSEL) constitute a propeptide that is removed on maturation. Residues 25–249 (IIGGDECNID…HLDWIQNIIA (225 aa)) form the Peptidase S1 domain. Disulfide bonds link cysteine 31–cysteine 163, cysteine 50–cysteine 66, cysteine 98–cysteine 256, cysteine 142–cysteine 210, cysteine 174–cysteine 189, and cysteine 200–cysteine 225. The active-site Charge relay system is the histidine 65. Residue asparagine 103 is glycosylated (N-linked (GlcNAc...) asparagine). Aspartate 110 functions as the Charge relay system in the catalytic mechanism. N-linked (GlcNAc...) asparagine glycans are attached at residues asparagine 121, asparagine 122, asparagine 154, and asparagine 170. The active-site Charge relay system is the serine 204.

The protein belongs to the peptidase S1 family. Snake venom subfamily. Monomer. Expressed by the venom gland.

It is found in the secreted. Its activity is regulated as follows. Its activity is inhibited by PMSF and p-nitrophenyl-p-guanidinobenzoate (NPGB). Snake venom serine protease. Degrades concomitantly alpha- (FGA) and beta-chains of fibrinogen (FGB). This Trimeresurus stejnegeri (Chinese green tree viper) protein is Alpha- and beta-fibrinogenase stejnefibrase-1.